The primary structure comprises 210 residues: ATP-dependent Clp protease proteolytic subunit 1 (210 aa).

Serine 106 functions as the Nucleophile in the catalytic mechanism. Histidine 131 is an active-site residue.

Belongs to the peptidase S14 family. In terms of assembly, fourteen ClpP subunits assemble into 2 heptameric rings which stack back to back to give a disk-like structure with a central cavity, resembling the structure of eukaryotic proteasomes.

Its subcellular location is the cytoplasm. It catalyses the reaction Hydrolysis of proteins to small peptides in the presence of ATP and magnesium. alpha-casein is the usual test substrate. In the absence of ATP, only oligopeptides shorter than five residues are hydrolyzed (such as succinyl-Leu-Tyr-|-NHMec, and Leu-Tyr-Leu-|-Tyr-Trp, in which cleavage of the -Tyr-|-Leu- and -Tyr-|-Trp bonds also occurs).. Its function is as follows. Cleaves peptides in various proteins in a process that requires ATP hydrolysis. Has a chymotrypsin-like activity. Plays a major role in the degradation of misfolded proteins. This Chelativorans sp. (strain BNC1) protein is ATP-dependent Clp protease proteolytic subunit 1.